A 516-amino-acid chain; its full sequence is L-amino-acid oxidase (516 aa).

The signal sequence occupies residues 1 to 18 (MNVFFMFSLLFLAALGSC). A disulfide bridge links Cys-28 with Cys-191. FAD is bound by residues 61–62 (MA), 81–82 (EA), Arg-89, and 105–108 (GPMR). Position 108 (Arg-108) interacts with substrate. N-linked (GlcNAc...) (complex) asparagine glycosylation is present at Asn-190. His-241 serves as a coordination point for substrate. Residue Val-279 coordinates FAD. Cys-349 and Cys-430 are joined by a disulfide. Asn-379 is a glycosylation site (N-linked (GlcNAc...) (complex) asparagine). Tyr-390 contributes to the substrate binding site. FAD is bound by residues Glu-475 and 482–487 (GWIDST). Position 482 to 483 (482 to 483 (GW)) interacts with substrate.

Homodimer; non-covalently linked. It depends on FAD as a cofactor. N-glycosylated at Asn-190 and Asn-379 with bis-sialylated, biantennary, core-fucosylated dodecasaccharide (composed of N-acetylglucosamine, fucose, mannose, galactose, and sialic acid residues). Expressed by the venom gland.

Its subcellular location is the secreted. The catalysed reaction is an L-alpha-amino acid + O2 + H2O = a 2-oxocarboxylate + H2O2 + NH4(+). It carries out the reaction L-leucine + O2 + H2O = 4-methyl-2-oxopentanoate + H2O2 + NH4(+). The enzyme catalyses L-phenylalanine + O2 + H2O = 3-phenylpyruvate + H2O2 + NH4(+). It catalyses the reaction L-tryptophan + O2 + H2O = indole-3-pyruvate + H2O2 + NH4(+). The catalysed reaction is L-methionine + O2 + H2O = 4-methylsulfanyl-2-oxobutanoate + H2O2 + NH4(+). It carries out the reaction L-isoleucine + O2 + H2O = (S)-3-methyl-2-oxopentanoate + H2O2 + NH4(+). The enzyme catalyses L-arginine + O2 + H2O = 5-guanidino-2-oxopentanoate + H2O2 + NH4(+). It catalyses the reaction L-aspartate + O2 + H2O = oxaloacetate + H2O2 + NH4(+). The catalysed reaction is L-histidine + O2 + H2O = 3-(imidazol-5-yl)pyruvate + H2O2 + NH4(+). It carries out the reaction L-2-aminohexanoate + O2 + H2O = 2-oxohexanoate + H2O2 + NH4(+). The enzyme catalyses L-2-aminopentanoate + O2 + H2O = 2-oxopentanoate + H2O2 + NH4(+). Its function is as follows. Catalyzes an oxidative deamination of predominantly hydrophobic and aromatic L-amino acids, thus producing hydrogen peroxide that may contribute to the diverse toxic effects of this enzyme. Shows high affinity for L-Phe, L-Trp, L-Met, L-Leu, and L-Ile, moderate affinity for L-Arg, L-Asp, and L-His, and very low affinity for L-Gln, L-Lys, and L-Ala. Also shows high activity on L-norleucine (L-2-aminohexanoate), and L-norvaline (L-2-aminopentanoate) and a weak activity on L-ornithine and L-aminobutyric acid. Also exhibits diverse biological activities, such as hemorrhage, hemolysis, edema, apoptosis of vascular endothelial cells or tumor cell lines, and antiparasitic activities, as well as regulation of platelet aggregation. Its effect on platelets is controversial, since it either induces aggregation or inhibits agonist-induced aggregation. These different effects are probably due to different experimental conditions. A possible explanation of high efficacy it that LAAO may bind to target cells through its sialylated glycan moiety that would bind to sialic acid-binding lectins (siglec) on target cells. This interaction may result in production of locally high concentrations of hydrogen peroxide in or near the binding interface, leading, in turn to oxidative damage of the siglec or another adjacent cell structural elements. The sequence is that of L-amino-acid oxidase from Calloselasma rhodostoma (Malayan pit viper).